We begin with the raw amino-acid sequence, 463 residues long: GTPase Der (463 aa).

2 EngA-type G domains span residues 2 to 164 (KKII…PKSK) and 198 to 369 (IKIG…KNYT). Residues 8-15 (GRPNVGKS), 55-59 (DSGGL), 116-119 (NKVD), 204-211 (GRVNVGKS), 251-255 (DTAGI), and 315-318 (NKWD) contribute to the GTP site. Residues 370–454 (QKMKTSRLNE…PVILIPKNRS (85 aa)) enclose the KH-like domain.

This sequence belongs to the TRAFAC class TrmE-Era-EngA-EngB-Septin-like GTPase superfamily. EngA (Der) GTPase family. As to quaternary structure, associates with the 50S ribosomal subunit.

In terms of biological role, GTPase that plays an essential role in the late steps of ribosome biogenesis. This is GTPase Der from Campylobacter fetus subsp. fetus (strain 82-40).